The following is a 655-amino-acid chain: Protein npp-24 (655 aa).

Residues 263–283 (ICSVFVLVSGGGVLSHLVVFP) form a helical membrane-spanning segment.

It localises to the membrane. The sequence is that of Protein npp-24 from Caenorhabditis elegans.